An 80-amino-acid chain; its full sequence is Turripeptide VI/VII-01 (80 aa).

Positions 1–22 are cleaved as a signal peptide; that stretch reads MRLQLILTITLLLTSFMGYRDA. A propeptide spanning residues 23–36 is cleaved from the precursor; it reads AVIQGKTERSAMKM. 3 disulfide bridges follow: C48–C61, C50–C65, and C60–C70. The propeptide occupies 77–80; that stretch reads SSAI.

In terms of tissue distribution, expressed by the venom duct.

The protein localises to the secreted. The protein is Turripeptide VI/VII-01 of Gemmula speciosa (Splendid gem-turris).